The following is a 73-amino-acid chain: Sec-independent protein translocase protein TatA (73 aa).

A helical membrane pass occupies residues 1–21 (MGSFSIWHWLIVLVIVMLVFG). A disordered region spans residues 43-73 (MKEGDDKAAPAKELRDSTTIDVDAKEKTRQQ).

It belongs to the TatA/E family. As to quaternary structure, the Tat system comprises two distinct complexes: a TatABC complex, containing multiple copies of TatA, TatB and TatC subunits, and a separate TatA complex, containing only TatA subunits. Substrates initially bind to the TatABC complex, which probably triggers association of the separate TatA complex to form the active translocon.

It localises to the cell inner membrane. Its function is as follows. Part of the twin-arginine translocation (Tat) system that transports large folded proteins containing a characteristic twin-arginine motif in their signal peptide across membranes. TatA could form the protein-conducting channel of the Tat system. In Cupriavidus pinatubonensis (strain JMP 134 / LMG 1197) (Cupriavidus necator (strain JMP 134)), this protein is Sec-independent protein translocase protein TatA.